Reading from the N-terminus, the 67-residue chain is Conotoxin Lt5.9 (67 aa).

Residues M1 to P19 form the signal peptide. Residues K20–V46 constitute a propeptide that is removed on maturation.

This sequence belongs to the conotoxin T superfamily. In terms of processing, contains 2 disulfide bonds that can be either 'C1-C3, C2-C4' or 'C1-C4, C2-C3', since these disulfide connectivities have been observed for conotoxins with cysteine framework V (for examples, see AC P0DQQ7 and AC P81755). Expressed by the venom duct.

The protein resides in the secreted. The sequence is that of Conotoxin Lt5.9 from Conus litteratus (Lettered cone).